We begin with the raw amino-acid sequence, 326 residues long: Olfactory receptor 11H12 (326 aa).

Over 1 to 44 the chain is Extracellular; that stretch reads MCPLTLQVTGLMNVSEPNSSFAFVNEFILQGFTCEWTIQIFLFS. Asparagine 13 and asparagine 18 each carry an N-linked (GlcNAc...) asparagine glycan. The chain crosses the membrane as a helical span at residues 45-65; the sequence is LFTTTYALTITGNGAIAFVLW. Topologically, residues 66 to 72 are cytoplasmic; that stretch reads CDWRLHT. The helical transmembrane segment at 73–93 threads the bilayer; that stretch reads PMYMFLGNFSFLEIWYVSSTV. The Extracellular portion of the chain corresponds to 94 to 112; the sequence is PKMLVNFLSEKKNISFAGC. Asparagine 106 is a glycosylation site (N-linked (GlcNAc...) asparagine). An intrachain disulfide couples cysteine 112 to cysteine 194. The chain crosses the membrane as a helical span at residues 113–133; the sequence is FLQFYFFFSLGTSECLLLTVM. The Cytoplasmic portion of the chain corresponds to 134-158; sequence AFDQYLAICRPLLYPNIMTGHLCAK. A helical membrane pass occupies residues 159-179; the sequence is LVILCWVCGFLWFLIPIVLIS. Topologically, residues 180 to 216 are extracellular; it reads QMPFCGPNIIDHVVCDPGPRFALDCVSAPRIQLFCYT. A helical transmembrane segment spans residues 217 to 237; the sequence is LSSLVIFGNFLFIIGSYTLVL. Over 238-259 the chain is Cytoplasmic; the sequence is KAVLGMPSSTGRHKAFSTCGSH. The helical transmembrane segment at 260–280 threads the bilayer; it reads LAVVSLCYSSLMVMYVSPGLG. The Extracellular portion of the chain corresponds to 281–287; sequence HSTGMQK. Residues 288–308 traverse the membrane as a helical segment; that stretch reads IETLFYAMVTPLFNPLIYSLQ. The Cytoplasmic portion of the chain corresponds to 309 to 326; that stretch reads NKEIKAALRKVLGSSNII.

This sequence belongs to the G-protein coupled receptor 1 family.

The protein resides in the cell membrane. In terms of biological role, odorant receptor. The polypeptide is Olfactory receptor 11H12 (OR11H12) (Homo sapiens (Human)).